Here is a 553-residue protein sequence, read N- to C-terminus: Protein Early 65 kDa (553 aa).

The protein resides in the host cytoplasm. Its function is as follows. May participate in the recruitment of G-actin to the host nucleus. This Autographa californica nuclear polyhedrosis virus (AcMNPV) protein is Protein Early 65 kDa (HE65).